The sequence spans 245 residues: Uridylate kinase (245 aa).

15-18 (KLSG) contributes to the ATP binding site. An involved in allosteric activation by GTP region spans residues 23 to 28 (GDEGFG). A UMP-binding site is contributed by Gly57. Residues Gly58 and Arg62 each contribute to the ATP site. UMP-binding positions include Asp77 and 138–145 (TGNPFCTT). Thr165, Tyr171, and Asp174 together coordinate ATP.

Belongs to the UMP kinase family. As to quaternary structure, homohexamer.

It is found in the cytoplasm. It catalyses the reaction UMP + ATP = UDP + ADP. It functions in the pathway pyrimidine metabolism; CTP biosynthesis via de novo pathway; UDP from UMP (UMPK route): step 1/1. Its activity is regulated as follows. Allosterically activated by GTP. Inhibited by UTP. Its function is as follows. Catalyzes the reversible phosphorylation of UMP to UDP. In Shewanella baltica (strain OS155 / ATCC BAA-1091), this protein is Uridylate kinase.